Here is a 231-residue protein sequence, read N- to C-terminus: Urease accessory protein UreE (231 aa).

A disordered region spans residues 185 to 231 (VASPLDEPHGSGLHIHGIHSHEEGHSHGDHDHDHSHSHGDHDHDHKH). Positions 203–231 (HSHEEGHSHGDHDHDHSHSHGDHDHDHKH) are enriched in basic and acidic residues.

It belongs to the UreE family.

It is found in the cytoplasm. Involved in urease metallocenter assembly. Binds nickel. Probably functions as a nickel donor during metallocenter assembly. The chain is Urease accessory protein UreE from Yersinia pestis bv. Antiqua (strain Antiqua).